The following is a 206-amino-acid chain: Histidine biosynthesis bifunctional protein HisIE (206 aa).

Residues 1-117 are phosphoribosyl-AMP cyclohydrolase; it reads MCNEPATSDV…SCFPAAPGQF (117 aa). Residues 118-206 are phosphoribosyl-ATP pyrophosphohydrolase; sequence LGALDALVAE…AVTVLEARHR (89 aa).

It in the N-terminal section; belongs to the PRA-CH family. In the C-terminal section; belongs to the PRA-PH family.

The protein resides in the cytoplasm. It catalyses the reaction 1-(5-phospho-beta-D-ribosyl)-ATP + H2O = 1-(5-phospho-beta-D-ribosyl)-5'-AMP + diphosphate + H(+). The enzyme catalyses 1-(5-phospho-beta-D-ribosyl)-5'-AMP + H2O = 1-(5-phospho-beta-D-ribosyl)-5-[(5-phospho-beta-D-ribosylamino)methylideneamino]imidazole-4-carboxamide. It functions in the pathway amino-acid biosynthesis; L-histidine biosynthesis; L-histidine from 5-phospho-alpha-D-ribose 1-diphosphate: step 2/9. The protein operates within amino-acid biosynthesis; L-histidine biosynthesis; L-histidine from 5-phospho-alpha-D-ribose 1-diphosphate: step 3/9. The sequence is that of Histidine biosynthesis bifunctional protein HisIE (hisI) from Xylella fastidiosa (strain Temecula1 / ATCC 700964).